The chain runs to 362 residues: Methylthioribose-1-phosphate isomerase (362 aa).

Substrate is bound by residues 53 to 55 (RGA), arginine 90, and glutamine 201. Catalysis depends on aspartate 241, which acts as the Proton donor. 251–252 (NK) serves as a coordination point for substrate.

The protein belongs to the eIF-2B alpha/beta/delta subunits family. MtnA subfamily.

It carries out the reaction 5-(methylsulfanyl)-alpha-D-ribose 1-phosphate = 5-(methylsulfanyl)-D-ribulose 1-phosphate. It functions in the pathway amino-acid biosynthesis; L-methionine biosynthesis via salvage pathway; L-methionine from S-methyl-5-thio-alpha-D-ribose 1-phosphate: step 1/6. In terms of biological role, catalyzes the interconversion of methylthioribose-1-phosphate (MTR-1-P) into methylthioribulose-1-phosphate (MTRu-1-P). The polypeptide is Methylthioribose-1-phosphate isomerase (Dechloromonas aromatica (strain RCB)).